The following is a 293-amino-acid chain: MTTAACRKCRDEVIWWAFFINIGQTTYKGVLGVLSGSAALVADAMHSGADVVATLVTMFSVKVSDKKADEKYPFGYGNIQFIASSIVGLILFFGALYLMYESTMQIIAGNTSSPSPFAVLGAIVSIATNELMFRYQSCVGRQNNSPAIIANAWDNRSDALSSVAVLIGIVAAVVGFPIADRLAAIGVGILVAKIGIELNIDAINGLMDTSVENDVLVDAYNIAKDSQHVHGVHYIRGRNVGEDVHLDINIYVDADLKVFESDLVADAIRRKIEAEVDHVRDVHVGVTPVRIAA.

Topologically, residues 1-12 are cytoplasmic; it reads MTTAACRKCRDE. The tract at residues 1 to 214 is transmembrane domain (TMD); it reads MTTAACRKCR…GLMDTSVEND (214 aa). Residues 13–33 form a helical membrane-spanning segment; that stretch reads VIWWAFFINIGQTTYKGVLGV. At 34–78 the chain is on the lumenal side; sequence LSGSAALVADAMHSGADVVATLVTMFSVKVSDKKADEKYPFGYGN. The helical transmembrane segment at 79–99 threads the bilayer; sequence IQFIASSIVGLILFFGALYLM. The Cytoplasmic portion of the chain corresponds to 100 to 105; the sequence is YESTMQ. A helical membrane pass occupies residues 106–126; that stretch reads IIAGNTSSPSPFAVLGAIVSI. Topologically, residues 127–158 are lumenal; it reads ATNELMFRYQSCVGRQNNSPAIIANAWDNRSD. Residues 159 to 179 form a helical membrane-spanning segment; it reads ALSSVAVLIGIVAAVVGFPIA. Over 180-293 the chain is Cytoplasmic; sequence DRLAAIGVGI…VGVTPVRIAA (114 aa). Residues 215-293 are C-terminal domain (CTD); it reads VLVDAYNIAK…VGVTPVRIAA (79 aa). Residues His245, Asp247, and His283 each contribute to the Zn(2+) site.

The protein belongs to the cation diffusion facilitator (CDF) transporter (TC 2.A.4) family. As to quaternary structure, the isolated C-terminal domain (approximately 213-293) forms homodimers. Forms heterodimers with MamM.

It is found in the magnetosome membrane. Plays a dual, essential role in magnetosome formation; required for magnetosome vesicle formation as well as biomineralization. Probably binds and transports iron. Requires heterodimerization with MamM for stability. This chain is Magnetosome protein MamB (mamB), found in Magnetospira sp. (strain QH-2) (Marine magnetic spirillum (strain QH-2)).